Here is a 329-residue protein sequence, read N- to C-terminus: Ficolin-2 (329 aa).

An N-terminal signal peptide occupies residues 1-29 (MELGGAAGALGPSGPLLVCLCFGTLAAQA). A Collagen-like domain is found at 52-111 (GCPGLPGAPGLKGETGAAGLKGERGLPGVPGKAGPAGPKGSTGAQGEKGARGEKGESGQL). A disordered region spans residues 64 to 113 (GETGAAGLKGERGLPGVPGKAGPAGPKGSTGAQGEKGARGEKGESGQLHS). A compositionally biased stretch (low complexity) spans 77–90 (LPGVPGKAGPAGPK). One can recognise a Fibrinogen C-terminal domain in the interval 112–329 (HSCATGPRTC…KVSEMKLRLT (218 aa)). Cystine bridges form between cysteine 114-cysteine 142 and cysteine 121-cysteine 149. Positions 265, 267, 269, and 271 each coordinate Ca(2+). The cysteines at positions 273 and 286 are disulfide-linked. Asparagine 316 carries an N-linked (GlcNAc...) asparagine glycan.

This sequence belongs to the ficolin lectin family. As to quaternary structure, homotrimer. Interacts with elastin. Interacts with MASP1 and MASP2.

The protein localises to the secreted. In terms of biological role, may function in innate immunity through activation of the lectin complement pathway. Calcium-dependent and GlcNAc-binding lectin. In Bos taurus (Bovine), this protein is Ficolin-2 (FCN2).